Here is a 786-residue protein sequence, read N- to C-terminus: MLERTLRVLEYNKVKEQLLEHTASSLGRDKVKHLVPSTDFEEIVEMQDTTDEAAKVIRLKGSAPLGGITDIRSNVKRAKIGSMLSPNELLDIANTMYGSRNMKRFIEDMVDNGVELPILETHVAQIVSLYDLEKKITNCIGDGGEVVDSASDKLRGIRTQIRTAESRIREKLENMTRSSNAQKMLSDSIVTIRNERYVIPVKQEYRGVYGGIVHDQSASGQTLFIEPQVIVELNNALQEARVKEKQEIERILLMLTEEVAVEADIVLSNVEVVANLDFIFAKAFYAKRIKATKPIVNNERYMDLRQARHPLIDPEVIVPNNIMLGKDFTTIVITGPNTGGKTVTLKTVGICVLMAQSGLHIPVMDESEICVFKNIFADIGDEQSIEQSLSTFSSHMVNIVDILEKADFESLVLFDELGAGTDPQEGAALAISILDEVCNRGARVVATTHYPELKAYGYNREQVINASVEFDVNTLSPTHKLLIGVPGRSNAFEISKRLGLSNRVIDQARNHISTDTNKIENMIAKLEESQKNAERDWNEAEALRKQSEKLHRELQRQIIEFNEERDERLLKAQKEGEEKVEAAKKEAEGIIQELRQLRKAQLANVKDHELIEAKSRLEGAAPELVKKQKVNVKNTAPKQQLRAGDEVKVLTFGQKGQLLEKVSDTEWSVQIGILKMKVKESNMEYINTPKQTEKKAVATVKGRDYHVSLELDLRGERFENAMARVEKYLDDAQLASYPRVSIIHGKGTGALRQGVQDYLKKHRGVKTFRYGDMGEGGLGVTVVELK.

335-342 serves as a coordination point for ATP; the sequence is GPNTGGKT. The Smr domain occupies 711-786; sequence LDLRGERFEN…GLGVTVVELK (76 aa).

The protein belongs to the DNA mismatch repair MutS family. MutS2 subfamily. Homodimer. Binds to stalled ribosomes, contacting rRNA.

Its function is as follows. Endonuclease that is involved in the suppression of homologous recombination and thus may have a key role in the control of bacterial genetic diversity. Functionally, acts as a ribosome collision sensor, splitting the ribosome into its 2 subunits. Detects stalled/collided 70S ribosomes which it binds and splits by an ATP-hydrolysis driven conformational change. Acts upstream of the ribosome quality control system (RQC), a ribosome-associated complex that mediates the extraction of incompletely synthesized nascent chains from stalled ribosomes and their subsequent degradation. Probably generates substrates for RQC. This Bacillus anthracis (strain A0248) protein is Endonuclease MutS2.